Consider the following 95-residue polypeptide: Large ribosomal subunit protein eL37y (95 aa).

Residues cysteine 19, cysteine 22, cysteine 34, and cysteine 37 each coordinate Zn(2+). The C4-type zinc-finger motif lies at cysteine 19–cysteine 37.

This sequence belongs to the eukaryotic ribosomal protein eL37 family. Zn(2+) is required as a cofactor.

Functionally, binds to the 23S rRNA. The polypeptide is Large ribosomal subunit protein eL37y (RPL37B) (Arabidopsis thaliana (Mouse-ear cress)).